A 429-amino-acid chain; its full sequence is Glutamate-1-semialdehyde 2,1-aminomutase 2 (429 aa).

Lys268 carries the post-translational modification N6-(pyridoxal phosphate)lysine.

The protein belongs to the class-III pyridoxal-phosphate-dependent aminotransferase family. HemL subfamily. Homodimer. Pyridoxal 5'-phosphate is required as a cofactor.

It is found in the cytoplasm. It catalyses the reaction (S)-4-amino-5-oxopentanoate = 5-aminolevulinate. Its pathway is porphyrin-containing compound metabolism; protoporphyrin-IX biosynthesis; 5-aminolevulinate from L-glutamyl-tRNA(Glu): step 2/2. The protein is Glutamate-1-semialdehyde 2,1-aminomutase 2 of Bacillus velezensis (strain DSM 23117 / BGSC 10A6 / LMG 26770 / FZB42) (Bacillus amyloliquefaciens subsp. plantarum).